The chain runs to 201 residues: MAEKFIKHTGLVVPLDAANVDTDAIIPKQFLQKVTRTGFGAHLFNDWRFLDEKGQQPNPDFVLNFSQYQGASILLARENFGCGSSREHAPWALTDYGFKVVIAPSFADIFYGNSFNNQLLPVKLSDAEVDELFALVKANPGIHFDVDLEAQEVKAGEKTYRFTIDAFRRHCMMNGLDSIGLTLQHDDAIAAYEAKQPAFMR.

It belongs to the LeuD family. LeuD type 1 subfamily. As to quaternary structure, heterodimer of LeuC and LeuD.

It carries out the reaction (2R,3S)-3-isopropylmalate = (2S)-2-isopropylmalate. Its pathway is amino-acid biosynthesis; L-leucine biosynthesis; L-leucine from 3-methyl-2-oxobutanoate: step 2/4. In terms of biological role, catalyzes the isomerization between 2-isopropylmalate and 3-isopropylmalate, via the formation of 2-isopropylmaleate. The sequence is that of 3-isopropylmalate dehydratase small subunit from Escherichia coli O157:H7.